A 935-amino-acid chain; its full sequence is Coatomer subunit gamma (935 aa).

HEAT repeat units follow at residues 258–296 (PQLF…RNSR), 337–372 (PEKI…TGTS), 373–410 (KNIS…NFPQ), 412–449 (WKSI…FVPQ), and 524–562 (PTLY…ARNK). Residues 630 to 656 (KSETTLDTTPEAESVPEKRADANSFAG) form a disordered region. Threonine 638 carries the post-translational modification Phosphothreonine. Serine 643 carries the post-translational modification Phosphoserine. Residue lysine 647 forms a Glycyl lysine isopeptide (Lys-Gly) (interchain with G-Cter in ubiquitin) linkage. Serine 653 carries the phosphoserine modification.

The protein belongs to the COPG family. In terms of assembly, oligomeric complex that consists of at least the alpha, beta, beta', gamma, delta, epsilon and zeta subunits. Interacts (via C-terminus) with GEA1 (via N-terminal region) and KEI1 (via C-terminal region).

Its subcellular location is the cytoplasm. The protein localises to the golgi apparatus membrane. The protein resides in the cytoplasmic vesicle. It is found in the COPI-coated vesicle membrane. It localises to the endosome. Functionally, the coatomer is a cytosolic protein complex that binds to dilysine motifs and reversibly associates with Golgi non-clathrin-coated vesicles, which further mediate biosynthetic protein transport from the ER, via the Golgi up to the trans Golgi network. Coatomer complex is required for budding from Golgi membranes, and is essential for the retrograde Golgi-to-ER transport of dilysine-tagged proteins. The sequence is that of Coatomer subunit gamma (SEC21) from Saccharomyces cerevisiae (strain ATCC 204508 / S288c) (Baker's yeast).